A 967-amino-acid polypeptide reads, in one-letter code: Haze protective factor 1 (967 aa).

The first 23 residues, 1–23, serve as a signal peptide directing secretion; it reads MFNRFNKLQAALALVLYSQSALG. N-linked (GlcNAc...) asparagine glycosylation is found at N28 and N35. A disordered region spans residues 72-301; the sequence is SSSTEVSSSI…STSSASTASG (230 aa). Tandem repeats lie at residues 93-105, 106-118, 119-131, 132-144, 153-165, 166-178, 179-191, 192-204, and 205-217. The interval 93 to 278 is 13 X approximate repeats, Ser-rich; that stretch reads SITSSGSSVS…QSGSSVSGSS (186 aa). One copy of the 1-10; approximate repeat lies at 218–230; sequence SATESGSASSVPS. The stretch at 234-247 is one 1-11; approximate repeat; sequence SVTESGSSSSASES. One copy of the 1-12; approximate repeat lies at 248–259; sequence SITQSGTASGSS. The stretch at 266–278 is one 1-13 repeat; sequence SVTQSGSSVSGSS. N-linked (GlcNAc...) asparagine glycosylation is found at N493, N601, and N638. 4 tandem repeats follow at residues 745–780, 781–815, 816–854, and 855–893. A 4.5 X approximate tandem repeats, Thr-rich region spans residues 745–902; sequence SSKSYTTVTV…ASPKSYTTVT (158 aa). Positions 836-857 are disordered; the sequence is KTVTSEAPKETSETSETSAAPK. Residues 894–902 form a 2-5; truncated repeat; that stretch reads SPKSYTTVT. A946 is lipidated: GPI-anchor amidated alanine. The propeptide at 947-967 is removed in mature form; sequence AGLNANTLNALVGIFVLAFFN.

This sequence belongs to the SRP1/TIP1 family. In terms of processing, the GPI-anchor is attached to the protein in the endoplasmic reticulum and serves to target the protein to the cell surface. There, the glucosamine-inositol phospholipid moiety is cleaved off and the GPI-modified mannoprotein is covalently attached via its lipidless GPI glycan remnant to the 1,6-beta-glucan of the outer cell wall layer.

The protein resides in the secreted. It is found in the cell wall. It localises to the membrane. Involved in cell wall organization and biosynthesis. The protein is Haze protective factor 1 (HPF1) of Saccharomyces cerevisiae (strain ATCC 204508 / S288c) (Baker's yeast).